A 64-amino-acid chain; its full sequence is Disintegrin VLO5A (64 aa).

The region spanning 1–64 (NSGNPCCDPV…SDCPRNPYKD (64 aa)) is the Disintegrin domain. Cystine bridges form between C6–C29, C20–C26, C25–C50, and C38–C57. Residues 42–44 (VGD) carry the Cell attachment site; atypical (VGD) motif.

This sequence belongs to the venom metalloproteinase (M12B) family. P-II subfamily. P-IIe sub-subfamily. As to quaternary structure, heterodimer with VLO5B; disulfide-linked. Expressed by the venom gland.

The protein localises to the secreted. Functionally, poor inhibitor of platelet aggregation. The disintegrin inhibits the adhesion of the alpha-4/beta-1 (ITGA4/ITGB1) integrin to VCAM-1. Inhibition on alpha-IIb/beta-3 (ITGA2B/ITGB3) is low. The chain is Disintegrin VLO5A from Macrovipera lebetina obtusa (Levant blunt-nosed viper).